The following is a 283-amino-acid chain: 5'-nucleotidase SurE (283 aa).

A divalent metal cation-binding residues include D14, D15, S47, and N105.

The protein belongs to the SurE nucleotidase family. Requires a divalent metal cation as cofactor.

The protein localises to the cytoplasm. It carries out the reaction a ribonucleoside 5'-phosphate + H2O = a ribonucleoside + phosphate. Its function is as follows. Nucleotidase that shows phosphatase activity on nucleoside 5'-monophosphates. The polypeptide is 5'-nucleotidase SurE (Chlamydia muridarum (strain MoPn / Nigg)).